Reading from the N-terminus, the 280-residue chain is Large ribosomal subunit protein uL2 (280 aa).

Disordered regions lie at residues 1–47 (MAIR…NVHG) and 224–280 (VVMN…SKKR). Positions 23-33 (EITRSTPEKSL) are enriched in basic and acidic residues. Basic residues predominate over residues 37-47 (LPKKGGRNVHG). A compositionally biased stretch (polar residues) spans 258-268 (RNPNRYSNNMI). Positions 270–280 (QRRRTNKSKKR) are enriched in basic residues.

The protein belongs to the universal ribosomal protein uL2 family. Part of the 50S ribosomal subunit. Forms a bridge to the 30S subunit in the 70S ribosome.

In terms of biological role, one of the primary rRNA binding proteins. Required for association of the 30S and 50S subunits to form the 70S ribosome, for tRNA binding and peptide bond formation. It has been suggested to have peptidyltransferase activity; this is somewhat controversial. Makes several contacts with the 16S rRNA in the 70S ribosome. The protein is Large ribosomal subunit protein uL2 of Corynebacterium diphtheriae (strain ATCC 700971 / NCTC 13129 / Biotype gravis).